The sequence spans 142 residues: Hemoglobin subunit alpha-1 (142 aa).

The Globin domain occupies 2–142 (VLSAADKSNV…VSTVLTSKYR (141 aa)). His59 is an O2 binding site. His88 serves as a coordination point for heme b.

The protein belongs to the globin family. In terms of assembly, heterotetramer of two alpha chains and two beta chains.

Its function is as follows. Involved in oxygen transport from the lung to the various peripheral tissues. Functionally, hemopressin acts as an antagonist peptide of the cannabinoid receptor CNR1. Hemopressin-binding efficiently blocks cannabinoid receptor CNR1 and subsequent signaling. The protein is Hemoglobin subunit alpha-1 (HBA1) of Capra hircus (Goat).